A 338-amino-acid polypeptide reads, in one-letter code: Anthranilate phosphoribosyltransferase (338 aa).

Residues Gly-81, 84-85 (GD), Thr-89, 91-94 (NIST), 109-117 (KHGNRAQSS), and Thr-121 each bind 5-phospho-alpha-D-ribose 1-diphosphate. An anthranilate-binding site is contributed by Gly-81. Ser-93 is a binding site for Mg(2+). Asn-112 is an anthranilate binding site. Arg-167 provides a ligand contact to anthranilate. Residues Asp-225 and Glu-226 each coordinate Mg(2+).

This sequence belongs to the anthranilate phosphoribosyltransferase family. As to quaternary structure, homodimer. Mg(2+) serves as cofactor.

It catalyses the reaction N-(5-phospho-beta-D-ribosyl)anthranilate + diphosphate = 5-phospho-alpha-D-ribose 1-diphosphate + anthranilate. The protein operates within amino-acid biosynthesis; L-tryptophan biosynthesis; L-tryptophan from chorismate: step 2/5. Functionally, catalyzes the transfer of the phosphoribosyl group of 5-phosphorylribose-1-pyrophosphate (PRPP) to anthranilate to yield N-(5'-phosphoribosyl)-anthranilate (PRA). The polypeptide is Anthranilate phosphoribosyltransferase (Rhizobium rhizogenes (strain K84 / ATCC BAA-868) (Agrobacterium radiobacter)).